The primary structure comprises 218 residues: 7-cyano-7-deazaguanine synthase (218 aa).

9–19 (YSGGMDSFTVL) contributes to the ATP binding site. 4 residues coordinate Zn(2+): Cys185, Cys193, Cys196, and Cys199.

The protein belongs to the QueC family. It depends on Zn(2+) as a cofactor.

The enzyme catalyses 7-carboxy-7-deazaguanine + NH4(+) + ATP = 7-cyano-7-deazaguanine + ADP + phosphate + H2O + H(+). Its pathway is purine metabolism; 7-cyano-7-deazaguanine biosynthesis. Its function is as follows. Catalyzes the ATP-dependent conversion of 7-carboxy-7-deazaguanine (CDG) to 7-cyano-7-deazaguanine (preQ(0)). The protein is 7-cyano-7-deazaguanine synthase of Pseudoalteromonas translucida (strain TAC 125).